The sequence spans 303 residues: Recombination-associated protein RdgC (303 aa).

The protein belongs to the RdgC family.

It is found in the cytoplasm. The protein localises to the nucleoid. Functionally, may be involved in recombination. The sequence is that of Recombination-associated protein RdgC from Enterobacter sp. (strain 638).